Consider the following 149-residue polypeptide: CyanoQ (149 aa).

Positions 1-21 (MSRLRSLLSLILVLVTTVLVS) are cleaved as a signal peptide. C22 is lipidated: N-palmitoyl cysteine. C22 carries the S-diacylglycerol cysteine lipid modification.

The protein belongs to the PsbQ family. CyanoQ subfamily. In terms of assembly, PSII is composed of 1 copy each of membrane proteins PsbA, PsbB, PsbC, PsbD, PsbE, PsbF, PsbH, PsbI, PsbJ, PsbK, PsbL, PsbM, PsbT, PsbX, PsbY, PsbZ, Psb30/Ycf12, peripheral proteins PsbO, CyanoQ (PsbQ), PsbU, PsbV and a large number of cofactors. It forms dimeric complexes. Pull-down experiments with His-tagged PsbQ pull down dimeric, but not monomeric, PSII. Post-translationally, the N-terminus is blocked. Upon expression in E.coli the N-terminus is modified with a diacylglycerol and an acyl group bound to two palmitates and one palmitoleate.

It is found in the cellular thylakoid membrane. In terms of biological role, one of the extrinsic, lumenal subunits of photosystem II (PSII), which stabilize and protect the oxygen-evolving complex. PSII is a light-driven water plastoquinone oxidoreductase, using light energy to abstract electrons from H(2)O, generating a proton gradient subsequently used for ATP formation. Plays a role in the stability of the oxygen-evolving center on the luminal side of PSII. Required for optimal photoautotrophic growth in the absence of Ca(2+) or Cl(-), functions in optimizing PSII water oxidation/O(2) evolving activity. Requires PsbO to bind to PSII. In Synechocystis sp. (strain ATCC 27184 / PCC 6803 / Kazusa), this protein is CyanoQ.